Consider the following 753-residue polypeptide: Glycerophosphodiester phosphodiesterase GDPDL6 (753 aa).

Residues 1 to 17 (MLRFFILFSLFLHSSVA) form the signal peptide. 2 GP-PDE domains span residues 41–339 (PAVV…SQSI) and 355–654 (ALVI…TRYL). 4 N-linked (GlcNAc...) asparagine glycosylation sites follow: asparagine 304, asparagine 516, asparagine 603, and asparagine 715. Residues 707 to 729 (PPVAKLASNGTEGGPPQTPPRSG) form a disordered region. Residues 731–751 (VAIAANLSLSLLAMMALGLLY) traverse the membrane as a helical segment.

The protein belongs to the glycerophosphoryl diester phosphodiesterase family. Expressed in flowers and siliques.

It is found in the membrane. The enzyme catalyses a sn-glycero-3-phosphodiester + H2O = an alcohol + sn-glycerol 3-phosphate + H(+). The sequence is that of Glycerophosphodiester phosphodiesterase GDPDL6 from Arabidopsis thaliana (Mouse-ear cress).